A 271-amino-acid chain; its full sequence is Phosphatidylinositol transfer protein alpha isoform (271 aa).

A 1,2-diacyl-sn-glycero-3-phospho-(1D-myo-inositol) contacts are provided by Thr59, Lys61, Glu86, Asn90, Thr97, and Lys195. Lys216 bears the N6-acetyllysine mark. The segment covering 251–264 (TKRQLDEMRQKDPV) has biased composition (basic and acidic residues). The tract at residues 251-271 (TKRQLDEMRQKDPVKGMTADD) is disordered.

The protein belongs to the PtdIns transfer protein family. PI transfer class I subfamily. In terms of processing, phosphorylated by PKC in a calcium and phosphatidylserine-dependent manner. As to expression, expressed in a wide range of tissues.

It localises to the cytoplasm. The protein resides in the nucleus. It catalyses the reaction a 1,2-diacyl-sn-glycero-3-phosphocholine(in) = a 1,2-diacyl-sn-glycero-3-phosphocholine(out). The catalysed reaction is a 1,2-diacyl-sn-glycero-3-phospho-(1D-myo-inositol)(in) = a 1,2-diacyl-sn-glycero-3-phospho-(1D-myo-inositol)(out). With respect to regulation, phosphatidylinositol transfer activity is inhibited by N-ethylmaleimide. Its function is as follows. Catalyzes the transfer of phosphatidylinositol (PI) and phosphatidylcholine (PC) between membranes. Shows a preference for PI and PC containing shorter saturated or monosaturated acyl chains at the sn-1 and sn-2 positions. Preference order for PC is C16:1 &gt; C16:0 &gt; C18:1 &gt; C18:0 &gt; C20:4 and for PI is C16:1 &gt; C16:0 &gt; C18:1 &gt; C18:0 &gt; C20:4 &gt; C20:3. In Rattus norvegicus (Rat), this protein is Phosphatidylinositol transfer protein alpha isoform (Pitpna).